The primary structure comprises 265 residues: MPADPGPEVGSGWPGLLMSCLKGPHVILKMEAMKIVHPEKFPELPAATPCFPPAPRPTPTLAPKRAWPSDTEIIVNQACGGDMPTLEGASHTPPLPRRPRKGSSELGFPRVAPVDEVIVNQYVIRPGPTASAPSSSGPVIAGEPLECPTCGHTYNVTQRRPRVLSCLHSVCEQCLQILYESCPKYKFISCPTCHRETVLFTDYGLAALAVNTSILSRLPPEALTAPSGGQWGGESEGSCYQTFRQYCGAACTCHVRNPLSACSIM.

The disordered stretch occupies residues 83 to 106 (MPTLEGASHTPPLPRRPRKGSSEL). Phosphoserine is present on S103. The segment at 147–194 (CPTCGHTYNVTQRRPRVLSCLHSVCEQCLQILYESCPKYKFISCPTCH) adopts an RING-type zinc-finger fold.

In Mus musculus (Mouse), this protein is RING finger protein 208 (Rnf208).